Consider the following 146-residue polypeptide: MAECDWDTVTVLRKKGSAAQSKSKQAVTAAQRKGEAVETSKKWAAGQNKQHVVTKNTAKLDRETEELSHQRVPLEVGKVIQQGRQNKGLTQKDLATKINEKPQIIAEYECGKAIPNNQVMGKIERAIGLKLRGKDIGLPLEACSKK.

The segment at 13 to 53 is disordered; the sequence is RKKGSAAQSKSKQAVTAAQRKGEAVETSKKWAAGQNKQHVV. Over residues 17-31 the composition is skewed to low complexity; it reads SAAQSKSKQAVTAAQ. The segment covering 32–41 has biased composition (basic and acidic residues); the sequence is RKGEAVETSK. The 55-residue stretch at 80–134 folds into the HTH cro/C1-type domain; it reads IQQGRQNKGLTQKDLATKINEKPQIIAEYECGKAIPNNQVMGKIERAIGLKLRGK. Residues 91-110 constitute a DNA-binding region (H-T-H motif); the sequence is QKDLATKINEKPQIIAEYEC.

It is found in the nucleus. Probable transcriptional coactivator. In Danio rerio (Zebrafish), this protein is Endothelial differentiation-related factor 1 homolog (edf1).